The sequence spans 503 residues: Probable DNA ligase (503 aa).

Glu210 contributes to the ATP binding site. Lys212 serves as the catalytic N6-AMP-lysine intermediate. Residues Arg217, Arg232, Glu261, Phe296, Arg367, and Lys373 each contribute to the ATP site.

This sequence belongs to the ATP-dependent DNA ligase family. Requires Mg(2+) as cofactor.

It carries out the reaction ATP + (deoxyribonucleotide)n-3'-hydroxyl + 5'-phospho-(deoxyribonucleotide)m = (deoxyribonucleotide)n+m + AMP + diphosphate.. DNA ligase that seals nicks in double-stranded DNA during DNA replication, DNA recombination and DNA repair. The protein is Probable DNA ligase of Rhodococcus opacus (strain B4).